The following is a 729-amino-acid chain: Replication restart protein PriA (729 aa).

The 168-residue stretch at 209 to 376 (QTALGRFRSF…QSGAYRLLQL (168 aa)) folds into the Helicase ATP-binding domain. ATP is bound at residue 222–229 (GITGSGKT). Residues 319 to 322 (DEEH) carry the DEAH box motif. The Zn(2+) site is built by Cys436, Cys439, Cys445, Cys448, Cys463, Cys466, Cys476, and Cys479. In terms of domain architecture, Helicase C-terminal spans 471 to 623 (PIPFKCPDCG…YAVFAENELN (153 aa)).

This sequence belongs to the helicase family. PriA subfamily. In terms of assembly, interacts with PriB with high affinity in the absence of DNA. Component of the replication restart primosome. Zn(2+) is required as a cofactor.

It catalyses the reaction Couples ATP hydrolysis with the unwinding of duplex DNA by translocating in the 3'-5' direction.. The enzyme catalyses ATP + H2O = ADP + phosphate + H(+). With respect to regulation, helicase and ATPase activities on forked DNA are stimulated by PriB; E.coli PriB does not stimulate this helicase. PriA:PriB complex-catalyzed duplex DNA winding is inhibited by CGS 15943 (CHEBI:131351). CGS 15943 decreases ATP hydrolysis and decreases PriA's affinity for DNA. Its function is as follows. Initiates the restart of stalled replication forks, which reloads the replicative helicase on sites other than the origin of replication. Recognizes and binds to abandoned replication forks and remodels them to uncover a helicase loading site. Promotes assembly of the primosome at these replication forks. Functionally, DNA helicase with greatest unwinding activity on forked DNA substrates with relatively short duplex lagging strand arms. A DNA-dependent ATPase. Required for DNA transformation and DNA repair. Binds single-stranded (ss)DNA and replication fork-like DNA but not double-stranded (ds)DNA. This is Replication restart protein PriA from Neisseria gonorrhoeae (strain ATCC 700825 / FA 1090).